The sequence spans 190 residues: Xanthine phosphoribosyltransferase (190 aa).

Residues Leu20 and Asn27 each contribute to the xanthine site. Residue 128–132 (ANGKA) participates in 5-phospho-alpha-D-ribose 1-diphosphate binding. Lys156 is a binding site for xanthine.

Belongs to the purine/pyrimidine phosphoribosyltransferase family. Xpt subfamily. In terms of assembly, homodimer.

The protein localises to the cytoplasm. The enzyme catalyses XMP + diphosphate = xanthine + 5-phospho-alpha-D-ribose 1-diphosphate. It participates in purine metabolism; XMP biosynthesis via salvage pathway; XMP from xanthine: step 1/1. Converts the preformed base xanthine, a product of nucleic acid breakdown, to xanthosine 5'-monophosphate (XMP), so it can be reused for RNA or DNA synthesis. In Pseudomonas fluorescens (strain Pf0-1), this protein is Xanthine phosphoribosyltransferase.